A 359-amino-acid polypeptide reads, in one-letter code: UDP-N-acetylglucosamine--N-acetylmuramyl-(pentapeptide) pyrophosphoryl-undecaprenol N-acetylglucosamine transferase (359 aa).

UDP-N-acetyl-alpha-D-glucosamine is bound by residues 14-16 (TGG), asparagine 126, arginine 166, serine 194, isoleucine 248, and glutamine 293.

Belongs to the glycosyltransferase 28 family. MurG subfamily.

The protein resides in the cell inner membrane. The catalysed reaction is di-trans,octa-cis-undecaprenyl diphospho-N-acetyl-alpha-D-muramoyl-L-alanyl-D-glutamyl-meso-2,6-diaminopimeloyl-D-alanyl-D-alanine + UDP-N-acetyl-alpha-D-glucosamine = di-trans,octa-cis-undecaprenyl diphospho-[N-acetyl-alpha-D-glucosaminyl-(1-&gt;4)]-N-acetyl-alpha-D-muramoyl-L-alanyl-D-glutamyl-meso-2,6-diaminopimeloyl-D-alanyl-D-alanine + UDP + H(+). The protein operates within cell wall biogenesis; peptidoglycan biosynthesis. In terms of biological role, cell wall formation. Catalyzes the transfer of a GlcNAc subunit on undecaprenyl-pyrophosphoryl-MurNAc-pentapeptide (lipid intermediate I) to form undecaprenyl-pyrophosphoryl-MurNAc-(pentapeptide)GlcNAc (lipid intermediate II). The protein is UDP-N-acetylglucosamine--N-acetylmuramyl-(pentapeptide) pyrophosphoryl-undecaprenol N-acetylglucosamine transferase of Verminephrobacter eiseniae (strain EF01-2).